The chain runs to 423 residues: Osteomodulin (423 aa).

The signal sequence occupies residues 1 to 20 (MGFLSPIYVLFFCFGVRVYC). Sulfotyrosine occurs at positions 22, 25, 31, 39, 51, and 77. Positions 53 to 91 (VPFYNNILGCAKECFCPTNFPTSMYCDNRKLKTIPIIPM) constitute an LRRNT domain. 11 LRR repeats span residues 92–113 (HIQQLNLQFNDIEAVTANSFIN), 116–129 (HLKEINLSHNKIKS), 142–164 (NLQQLHLEHNNLEEFPFPLPKSL), 165–184 (ERLLLGYNEISILPTNAMDG), 187–207 (NVTMLDLCYNHLSDSMLKEKT), 213–233 (KLMQLNLCNNRLESMPLGLPS), 234–255 (SLMYLSLENNSISSIPDNYFDK), 258–279 (KLHALRISHNKLEDIPYDIFNL), 281–294 (NLIELNVGHNKLKQ), 301–322 (NLEHLYLQNNEIESINVTMICP), and 331–353 (HLTYLRVDQNKLKEPISSYIFFC). N-linked (GlcNAc...) asparagine glycosylation is found at Asn-113 and Asn-121. An N-linked (GlcNAc...) asparagine glycan is attached at Asn-187. 2 N-linked (GlcNAc...) asparagine glycosylation sites follow: Asn-242 and Asn-278. Asn-316 is a glycosylation site (N-linked (GlcNAc...) asparagine). A disulfide bridge links Cys-321 with Cys-353. The interval 381–406 (RSYQEEEEEDDHDSQDNTLEGQEVSD) is disordered. Sulfotyrosine is present on residues Tyr-413 and Tyr-414.

The protein belongs to the small leucine-rich proteoglycan (SLRP) family. SLRP class II subfamily. In terms of assembly, binds the alpha(V)beta(3)-integrin. In terms of processing, glycosylated; contains keratan sulfate. In terms of tissue distribution, bone specific.

It is found in the secreted. The protein resides in the extracellular space. The protein localises to the extracellular matrix. Its function is as follows. May be implicated in biomineralization processes. Has a function in binding of osteoblasts via the alpha(V)beta(3)-integrin. This is Osteomodulin (Omd) from Mus musculus (Mouse).